The primary structure comprises 85 residues: UPF0410 protein YdaS (85 aa).

The next 3 helical transmembrane spans lie at 2–22, 28–48, and 58–78; these read LSFL…SAIV, GGIF…HGLL, and FAIF…GLIF.

Belongs to the UPF0410 family.

The protein resides in the cell membrane. The chain is UPF0410 protein YdaS (ydaS) from Bacillus subtilis (strain 168).